The primary structure comprises 510 residues: NAD(P)H-quinone oxidoreductase subunit 2 A, chloroplastic (510 aa).

12 consecutive transmembrane segments (helical) span residues 31 to 51 (FIFP…IDLT), 59 to 79 (WFYF…LFRW), 99 to 119 (IFQF…VEYI), 124 to 144 (MAIT…MFLC), 149 to 169 (LITI…LSGY), 183 to 203 (YLLM…WLYG), 229 to 249 (ISIA…PAPF), 295 to 315 (WHLL…LLAI), 323 to 343 (MLAY…IVGD), 354 to 374 (YMLF…LFGL), 395 to 415 (ALSL…AGFF), and 418 to 438 (LYLF…IGLL).

This sequence belongs to the complex I subunit 2 family. In terms of assembly, NDH is composed of at least 16 different subunits, 5 of which are encoded in the nucleus.

Its subcellular location is the plastid. The protein localises to the chloroplast thylakoid membrane. The catalysed reaction is a plastoquinone + NADH + (n+1) H(+)(in) = a plastoquinol + NAD(+) + n H(+)(out). It catalyses the reaction a plastoquinone + NADPH + (n+1) H(+)(in) = a plastoquinol + NADP(+) + n H(+)(out). Its function is as follows. NDH shuttles electrons from NAD(P)H:plastoquinone, via FMN and iron-sulfur (Fe-S) centers, to quinones in the photosynthetic chain and possibly in a chloroplast respiratory chain. The immediate electron acceptor for the enzyme in this species is believed to be plastoquinone. Couples the redox reaction to proton translocation, and thus conserves the redox energy in a proton gradient. This chain is NAD(P)H-quinone oxidoreductase subunit 2 A, chloroplastic, found in Oryza nivara (Indian wild rice).